The primary structure comprises 244 residues: Carbonyl reductase [NADPH] 2 (244 aa).

Residue 11–39 (LVTGAGKGIGRDTVKALHASGAKVVAVTR) participates in NADP(+) binding. Residue Ser-42 is modified to Phosphoserine. Ser-136 is a substrate binding site. The active-site Proton acceptor is the Tyr-149. The residue at position 176 (Ser-176) is a Phosphoserine.

Belongs to the short-chain dehydrogenases/reductases (SDR) family. Homotetramer. Predominantly expressed in lung, in ciliated cells, non-ciliated bronchiolar cells and type-II alveolar pneumocytes. Also detected in adipose tissue (at protein level). Low expression in testis, heart, kidney, spleen, brain and liver.

Its subcellular location is the mitochondrion matrix. The enzyme catalyses a secondary alcohol + NADP(+) = a ketone + NADPH + H(+). Functionally, may function in the pulmonary metabolism of endogenous carbonyl compounds, such as aliphatic aldehydes and ketones derived from lipid peroxidation, 3-ketosteroids and fatty aldehydes, as well as in xenobiotic metabolism. This chain is Carbonyl reductase [NADPH] 2 (Cbr2), found in Mus musculus (Mouse).